Reading from the N-terminus, the 152-residue chain is Transcriptional repressor NrdR (152 aa).

Residues 3–34 (CPHCHHNGSRVIDSRPAEDGMSIRRRRECVNC) fold into a zinc finger. The ATP-cone domain occupies 49-139 (LLVVKKDGTR…VYRQFKDVDA (91 aa)).

The protein belongs to the NrdR family. Zn(2+) is required as a cofactor.

In terms of biological role, negatively regulates transcription of bacterial ribonucleotide reductase nrd genes and operons by binding to NrdR-boxes. This Limosilactobacillus fermentum (strain NBRC 3956 / LMG 18251) (Lactobacillus fermentum) protein is Transcriptional repressor NrdR.